A 420-amino-acid chain; its full sequence is UDP-N-acetylglucosamine 1-carboxyvinyltransferase (420 aa).

Residue 22–23 (KN) coordinates phosphoenolpyruvate. Arginine 91 is a binding site for UDP-N-acetyl-alpha-D-glucosamine. Catalysis depends on cysteine 115, which acts as the Proton donor. A 2-(S-cysteinyl)pyruvic acid O-phosphothioketal modification is found at cysteine 115. UDP-N-acetyl-alpha-D-glucosamine is bound by residues 120-124 (RPVDL), 160-163 (KVSV), aspartate 305, and isoleucine 327.

It belongs to the EPSP synthase family. MurA subfamily.

It is found in the cytoplasm. It carries out the reaction phosphoenolpyruvate + UDP-N-acetyl-alpha-D-glucosamine = UDP-N-acetyl-3-O-(1-carboxyvinyl)-alpha-D-glucosamine + phosphate. It participates in cell wall biogenesis; peptidoglycan biosynthesis. Functionally, cell wall formation. Adds enolpyruvyl to UDP-N-acetylglucosamine. This chain is UDP-N-acetylglucosamine 1-carboxyvinyltransferase, found in Pectobacterium atrosepticum (strain SCRI 1043 / ATCC BAA-672) (Erwinia carotovora subsp. atroseptica).